Here is a 901-residue protein sequence, read N- to C-terminus: Protein translocase subunit SecA (901 aa).

ATP-binding positions include glutamine 85, 103-107 (GEGKT), and aspartate 510. Basic and acidic residues predominate over residues 836-845 (EEAERARQEM). Residues 836-901 (EEAERARQEM…HCHGSRVARQ (66 aa)) form a disordered region. Polar residues predominate over residues 849 to 866 (INQNNLPVDENSQTTQNS). Residues cysteine 882, cysteine 884, cysteine 893, and histidine 894 each coordinate Zn(2+). Residues 888-901 (KKYKHCHGSRVARQ) show a composition bias toward basic residues.

The protein belongs to the SecA family. Monomer and homodimer. Part of the essential Sec protein translocation apparatus which comprises SecA, SecYEG and auxiliary proteins SecDF-YajC and YidC. It depends on Zn(2+) as a cofactor.

Its subcellular location is the cell inner membrane. The protein localises to the cytoplasm. The enzyme catalyses ATP + H2O + cellular proteinSide 1 = ADP + phosphate + cellular proteinSide 2.. Its function is as follows. Part of the Sec protein translocase complex. Interacts with the SecYEG preprotein conducting channel. Has a central role in coupling the hydrolysis of ATP to the transfer of proteins into and across the cell membrane, serving both as a receptor for the preprotein-SecB complex and as an ATP-driven molecular motor driving the stepwise translocation of polypeptide chains across the membrane. This chain is Protein translocase subunit SecA, found in Haemophilus influenzae (strain PittEE).